The chain runs to 459 residues: MGIEPSLPQSSPAPAKLTDPYLQIEGGYRLSGEVTISGAKNSSLALMAASLLTMEPCRLHNVPKLADIRMMSAILESLGVRVKPVAANTLDIDPRFLSVHRAPYELVNSLRASFFILGPILARLGMARIPLPGGCAIGARPVDLHVRGLQALGAQVRIEHGIVEARARKLRGGRIYLDYPSVGATETIMMAATLAEGETVIENAAQEPEVVDLANFCRSMGAHIRGAGSKTIVISGVPRLHGSEYHVIPDRIETGTFMAAAAITRSTLRIGPVFPEHLAAVLAKLREMGSVVNLVGPGTLEVSPGRVMAATDIETLPFPGFPTDMQAQFMSVLAVSEGTSIISETVFENRLMHVPELNRLGADIRVRSGHAIVRGVLKLSGAPVVATDLRASAALVIAGLAAHGTTTIAGLHHLDRGYESIERKLQALGARIERHLPSAPPSEVSSAVAAGPDAAAAPV.

Lysine 40–asparagine 41 provides a ligand contact to phosphoenolpyruvate. Arginine 111 serves as a coordination point for UDP-N-acetyl-alpha-D-glucosamine. Cysteine 135 acts as the Proton donor in catalysis. A 2-(S-cysteinyl)pyruvic acid O-phosphothioketal modification is found at cysteine 135. UDP-N-acetyl-alpha-D-glucosamine is bound by residues arginine 140–leucine 144, aspartate 324, and valine 346. Positions proline 437 to valine 459 are disordered. Residues proline 441 to valine 459 are compositionally biased toward low complexity.

It belongs to the EPSP synthase family. MurA subfamily.

The protein resides in the cytoplasm. It catalyses the reaction phosphoenolpyruvate + UDP-N-acetyl-alpha-D-glucosamine = UDP-N-acetyl-3-O-(1-carboxyvinyl)-alpha-D-glucosamine + phosphate. The protein operates within cell wall biogenesis; peptidoglycan biosynthesis. Its function is as follows. Cell wall formation. Adds enolpyruvyl to UDP-N-acetylglucosamine. This Gloeobacter violaceus (strain ATCC 29082 / PCC 7421) protein is UDP-N-acetylglucosamine 1-carboxyvinyltransferase.